The sequence spans 430 residues: Isocitrate dehydrogenase [NADP], mitochondrial (430 aa).

Residues Met1–Ala27 constitute a mitochondrion transit peptide. NADP(+) is bound by residues Thr101–Thr103 and Arg108. Residue Thr103 participates in substrate binding. Substrate-binding positions include Ser120–Arg126, Arg135, and Arg158. Asp277 contributes to the Mn(2+) binding site. Lys285 is a binding site for NADP(+). Asp300 contacts Mn(2+). Residues Gly335 to His340 and Asn353 contribute to the NADP(+) site.

It belongs to the isocitrate and isopropylmalate dehydrogenases family. Homodimer. Requires Mg(2+) as cofactor. It depends on Mn(2+) as a cofactor.

The protein localises to the mitochondrion. The catalysed reaction is D-threo-isocitrate + NADP(+) = 2-oxoglutarate + CO2 + NADPH. Functionally, mitochondrial IDP1 may regulate flux through the tricarboxylic acid cycle and respiration. Its probably critical function is the production of NADPH. This chain is Isocitrate dehydrogenase [NADP], mitochondrial (IDP1), found in Candida tropicalis (Yeast).